The primary structure comprises 406 residues: Serine/threonine transporter SstT (406 aa).

9 consecutive transmembrane segments (helical) span residues 21 to 41 (LIIGIMLALWIPDIAAPVAIL), 45 to 65 (FVGALKAVAPVLVLILVMGAI), 79 to 99 (ILILYLLGTFLAGVTAVIASF), 138 to 158 (ALMNANYIGILSWAILLGLAL), 179 to 199 (VVKWVINLAPLGILGLVFDSI), 213 to 233 (LLLLLVGCMVFVALIINPLIV), 285 to 305 (ISIPLGATINMAGAAVTIAVL), 313 to 333 (LGITVDIPTAIILSVLSAIAA), and 360 to 380 (IAMQVVGVGFIIGVVQDSCET).

The protein belongs to the dicarboxylate/amino acid:cation symporter (DAACS) (TC 2.A.23) family.

It localises to the cell membrane. The catalysed reaction is L-serine(in) + Na(+)(in) = L-serine(out) + Na(+)(out). It carries out the reaction L-threonine(in) + Na(+)(in) = L-threonine(out) + Na(+)(out). Involved in the import of serine and threonine into the cell, with the concomitant import of sodium (symport system). This Desulfitobacterium hafniense (strain Y51) protein is Serine/threonine transporter SstT.